We begin with the raw amino-acid sequence, 155 residues long: MIVYGVYNSPLGTITVAKNERGIIMLDFCDCAERNLVDNSTFTDLFHKFDNYFQGKPVEFNETVDLFVNNFRRRVFNEVRRIGWGKVKTYKEIAETLKTSPRAVGMALSKNPVLLIIPCHRIIAESGLGGFSRGIELKKKLLELEGVNIEALVRG.

Catalysis depends on Cys119, which acts as the Nucleophile; methyl group acceptor.

Belongs to the MGMT family.

It localises to the cytoplasm. The catalysed reaction is a 6-O-methyl-2'-deoxyguanosine in DNA + L-cysteinyl-[protein] = S-methyl-L-cysteinyl-[protein] + a 2'-deoxyguanosine in DNA. It carries out the reaction a 4-O-methyl-thymidine in DNA + L-cysteinyl-[protein] = a thymidine in DNA + S-methyl-L-cysteinyl-[protein]. Functionally, involved in the cellular defense against the biological effects of O6-methylguanine (O6-MeG) and O4-methylthymine (O4-MeT) in DNA. Repairs the methylated nucleobase in DNA by stoichiometrically transferring the methyl group to a cysteine residue in the enzyme. This is a suicide reaction: the enzyme is irreversibly inactivated. The sequence is that of Methylated-DNA--protein-cysteine methyltransferase from Sulfolobus acidocaldarius (strain ATCC 33909 / DSM 639 / JCM 8929 / NBRC 15157 / NCIMB 11770).